The following is a 494-amino-acid chain: Ketol-acid reductoisomerase (NADP(+)) (494 aa).

The region spanning 14-208 is the KARI N-terminal Rossmann domain; the sequence is LDQLGRCRFM…GGHRAGCLES (195 aa). NADP(+) contacts are provided by residues 45-48, Arg-68, Arg-76, Ser-78, and 108-110; these read CGAQ and DKQ. Residue His-132 is part of the active site. Gly-158 contributes to the NADP(+) binding site. KARI C-terminal knotted domains are found at residues 209–344 and 345–487; these read SFVA…NYPE and TDVE…MTDM. Mg(2+) is bound by residues Asp-217, Glu-221, Glu-389, and Glu-393. Ser-414 is a substrate binding site.

It belongs to the ketol-acid reductoisomerase family. Requires Mg(2+) as cofactor.

The catalysed reaction is (2R)-2,3-dihydroxy-3-methylbutanoate + NADP(+) = (2S)-2-acetolactate + NADPH + H(+). The enzyme catalyses (2R,3R)-2,3-dihydroxy-3-methylpentanoate + NADP(+) = (S)-2-ethyl-2-hydroxy-3-oxobutanoate + NADPH + H(+). It participates in amino-acid biosynthesis; L-isoleucine biosynthesis; L-isoleucine from 2-oxobutanoate: step 2/4. The protein operates within amino-acid biosynthesis; L-valine biosynthesis; L-valine from pyruvate: step 2/4. Involved in the biosynthesis of branched-chain amino acids (BCAA). Catalyzes an alkyl-migration followed by a ketol-acid reduction of (S)-2-acetolactate (S2AL) to yield (R)-2,3-dihydroxy-isovalerate. In the isomerase reaction, S2AL is rearranged via a Mg-dependent methyl migration to produce 3-hydroxy-3-methyl-2-ketobutyrate (HMKB). In the reductase reaction, this 2-ketoacid undergoes a metal-dependent reduction by NADPH to yield (R)-2,3-dihydroxy-isovalerate. The sequence is that of Ketol-acid reductoisomerase (NADP(+)) from Vibrio parahaemolyticus serotype O3:K6 (strain RIMD 2210633).